The chain runs to 977 residues: Disks large-associated protein 3 (977 aa).

A compositionally biased stretch (basic and acidic residues) spans 1–10; the sequence is MRGYHGDRGS. 6 disordered regions span residues 1-30, 52-90, 137-167, 181-289, 398-417, and 529-582; these read MRGY…PAAR, AGLG…SSTF, FHTL…ESPS, AKSH…CLDA, AMGD…SPKA, and PGSS…SADG. Low complexity predominate over residues 53–73; the sequence is GLGHLSPEGPLSLSEGPSSVG. S58 is subject to Phosphoserine. Over residues 74–85 the composition is skewed to gly residues; that stretch reads PEGGPGGVGAGG. Over residues 189-201 the composition is skewed to basic and acidic residues; it reads PGKRDYNGPKAEG. A compositionally biased stretch (low complexity) spans 202 to 212; that stretch reads RSSSGGDSYSG. Basic residues predominate over residues 221 to 245; the sequence is SHHHHHHHHHHHHQSRHGKRSKSKD. Over residues 258–271 the composition is skewed to low complexity; sequence GWWSSDDNLDSDSG. A phosphoserine mark is found at S404, S407, S410, and S414. The span at 538 to 547 shows a compositional bias: pro residues; it reads APPPIPPGSQ. Residues S641 and S643 each carry the phosphoserine modification. Disordered regions lie at residues 739–788 and 906–939; these read EGYP…RTSP and EEKK…RQRQ. Pro residues predominate over residues 754–763; the sequence is PGPPPVPAPG. Composition is skewed to basic and acidic residues over residues 767–777 and 925–939; these read GRRDSWMERGS and PVKE…RQRQ. Phosphoserine is present on residues S930, S933, and S965.

The protein belongs to the SAPAP family. In terms of assembly, interacts with DLG1 and DLG4/PSD-95. In terms of tissue distribution, expressed in most brain regions.

It is found in the cell membrane. The protein localises to the postsynaptic density. The protein resides in the synapse. May play a role in the molecular organization of synapses and neuronal cell signaling. Could be an adapter protein linking ion channel to the subsynaptic cytoskeleton. May induce enrichment of PSD-95/SAP90 at the plasma membrane. In Rattus norvegicus (Rat), this protein is Disks large-associated protein 3 (Dlgap3).